A 379-amino-acid polypeptide reads, in one-letter code: MHKTEAQTYLLYDRTLLLLTMGLVGIGLVMVISTSMPIGVRLSEDPFYFARRYAFYLGLAVVLSLVTLGIPMASWQRGSSLILLITLIMLLLVLIAGQSVNGAVRWLALGPWRIQPAELSKLALFCYLASYLVRKAEEVRTNFWGFCKPIGVMVLLAILLLAQPDLGTVLVLFITTLAMLFLAEAKIWQFLPIIGTGILAVMLLIIAKPYRRRRVTSFLNPWDDPFGRGYQLTNSLIAFGRGELWGQGLGNSIQKFEYLTEAHTDFICSILGEELGYFGVLLALLMVFLVAFRAMSIGRKALAINQIFSGFLACSIGIWFSFQTMVNVGAAAGMLPTKGLTLPFISYGGSSMLIMLTAIVLLIRIDFETRLAKLQAFVR.

Topologically, residues Met-1 to Thr-15 are cytoplasmic. The helical transmembrane segment at Leu-16–Met-36 threads the bilayer. The Periplasmic segment spans residues Pro-37–Arg-52. The helical transmembrane segment at Tyr-53 to Ala-73 threads the bilayer. Topologically, residues Ser-74 to Ser-79 are cytoplasmic. A helical transmembrane segment spans residues Ser-80–Val-100. Residues Asn-101–Arg-113 are Periplasmic-facing. The chain crosses the membrane as a helical span at residues Ile-114–Val-133. The Cytoplasmic portion of the chain corresponds to Arg-134–Val-139. Residues Arg-140–Ala-162 form a helical membrane-spanning segment. Topologically, residues Gln-163 to Asp-165 are periplasmic. Residues Leu-166 to Ala-183 traverse the membrane as a helical segment. Topologically, residues Glu-184–Lys-186 are cytoplasmic. The chain crosses the membrane as a helical span at residues Ile-187 to Ala-207. Residues Lys-208 to Ser-269 lie on the Periplasmic side of the membrane. The chain crosses the membrane as a helical span at residues Ile-270 to Val-290. The Cytoplasmic segment spans residues Ala-291 to Ala-301. Residues Leu-302–Phe-322 form a helical membrane-spanning segment. Over Gln-323 to Leu-342 the chain is Periplasmic. The helical transmembrane segment at Pro-343–Ile-363 threads the bilayer. Residues Arg-364 to Arg-379 lie on the Cytoplasmic side of the membrane.

It belongs to the SEDS family. FtsW subfamily.

The protein localises to the cell inner membrane. The catalysed reaction is [GlcNAc-(1-&gt;4)-Mur2Ac(oyl-L-Ala-gamma-D-Glu-L-Lys-D-Ala-D-Ala)](n)-di-trans,octa-cis-undecaprenyl diphosphate + beta-D-GlcNAc-(1-&gt;4)-Mur2Ac(oyl-L-Ala-gamma-D-Glu-L-Lys-D-Ala-D-Ala)-di-trans,octa-cis-undecaprenyl diphosphate = [GlcNAc-(1-&gt;4)-Mur2Ac(oyl-L-Ala-gamma-D-Glu-L-Lys-D-Ala-D-Ala)](n+1)-di-trans,octa-cis-undecaprenyl diphosphate + di-trans,octa-cis-undecaprenyl diphosphate + H(+). The protein operates within cell wall biogenesis; peptidoglycan biosynthesis. Peptidoglycan polymerase that is essential for cell division. This is Probable peptidoglycan glycosyltransferase FtsW from Moranella endobia (strain PCIT).